The primary structure comprises 130 residues: Small ribosomal subunit protein uS9 (130 aa).

The tract at residues 104-130 (LTRDPRMKERKKYGLKKARRAPQFSKR) is disordered. Positions 111 to 130 (KERKKYGLKKARRAPQFSKR) are enriched in basic residues.

This sequence belongs to the universal ribosomal protein uS9 family.

The chain is Small ribosomal subunit protein uS9 from Ruminiclostridium cellulolyticum (strain ATCC 35319 / DSM 5812 / JCM 6584 / H10) (Clostridium cellulolyticum).